The chain runs to 240 residues: Phosducin-like protein 2 (240 aa).

A Phosducin domain is found at 38–201 (QQEAMVKPYE…LEWKLSEVGA (164 aa)). A thioredoxin fold region spans residues 89-240 (FGELREISGN…DSSGSDTEAK (152 aa)).

It belongs to the phosducin family. Interacts with the CCT chaperonin complex and actin. Testis-specific (at protein level).

It is found in the endoplasmic reticulum. Essential for male fertility, spermiogenesis and acrosome formation. This chain is Phosducin-like protein 2 (Pdcl2), found in Mus musculus (Mouse).